The following is a 67-amino-acid chain: Probable Sec-independent protein translocase protein TatE (67 aa).

A helical transmembrane segment spans residues 4-21; it reads ISITKLLVIAALVVLLFG.

Belongs to the TatA/E family. TatE subfamily.

The protein localises to the cell inner membrane. Functionally, part of the twin-arginine translocation (Tat) system that transports large folded proteins containing a characteristic twin-arginine motif in their signal peptide across membranes. TatE shares overlapping functions with TatA. The chain is Probable Sec-independent protein translocase protein TatE from Citrobacter rodentium (strain ICC168) (Citrobacter freundii biotype 4280).